The primary structure comprises 255 residues: 2-succinyl-6-hydroxy-2,4-cyclohexadiene-1-carboxylate synthase (255 aa).

This sequence belongs to the AB hydrolase superfamily. MenH family. Monomer.

The enzyme catalyses 5-enolpyruvoyl-6-hydroxy-2-succinyl-cyclohex-3-ene-1-carboxylate = (1R,6R)-6-hydroxy-2-succinyl-cyclohexa-2,4-diene-1-carboxylate + pyruvate. It functions in the pathway quinol/quinone metabolism; 1,4-dihydroxy-2-naphthoate biosynthesis; 1,4-dihydroxy-2-naphthoate from chorismate: step 3/7. Its pathway is quinol/quinone metabolism; menaquinone biosynthesis. Its function is as follows. Catalyzes a proton abstraction reaction that results in 2,5-elimination of pyruvate from 2-succinyl-5-enolpyruvyl-6-hydroxy-3-cyclohexene-1-carboxylate (SEPHCHC) and the formation of 2-succinyl-6-hydroxy-2,4-cyclohexadiene-1-carboxylate (SHCHC). The polypeptide is 2-succinyl-6-hydroxy-2,4-cyclohexadiene-1-carboxylate synthase (Serratia proteamaculans (strain 568)).